Reading from the N-terminus, the 233-residue chain is MTELTVNQPLNYRNTGFITSAPDIRHLPQDTGVEIAFAGRSNAGKSSALNRITDQKGLARTSKTPGRTQLINMFEVTQGCNLIDLPGYGFAQVPLELKIKWQKALGEYLQKRECLKGLVVLMDIRHPMKDLDQQMIFWAIESRLPVLVLLTKADKMKSGARKAQLLKVRESSKSFGGDVQIELFSSLKGIGLDQVRRKLDTWFGPELERQLMLAAAENGETYTGESLSDKSDD.

Positions T31–P205 constitute an EngB-type G domain. GTP is bound by residues G39 to S46, G66 to L70, D84 to G87, T151 to D154, and F184 to S186. 2 residues coordinate Mg(2+): S46 and T68.

The protein belongs to the TRAFAC class TrmE-Era-EngA-EngB-Septin-like GTPase superfamily. EngB GTPase family. The cofactor is Mg(2+).

Its function is as follows. Necessary for normal cell division and for the maintenance of normal septation. The sequence is that of Probable GTP-binding protein EngB from Photobacterium profundum (strain SS9).